Consider the following 205-residue polypeptide: Imidazoleglycerol-phosphate dehydratase (205 aa).

Belongs to the imidazoleglycerol-phosphate dehydratase family.

It localises to the cytoplasm. It catalyses the reaction D-erythro-1-(imidazol-4-yl)glycerol 3-phosphate = 3-(imidazol-4-yl)-2-oxopropyl phosphate + H2O. It participates in amino-acid biosynthesis; L-histidine biosynthesis; L-histidine from 5-phospho-alpha-D-ribose 1-diphosphate: step 6/9. The polypeptide is Imidazoleglycerol-phosphate dehydratase (Chloroflexus aggregans (strain MD-66 / DSM 9485)).